The sequence spans 30 residues: Cyclotide mela-5 (30 aa).

Residues 1-30 (GSAIACGESCFKFKCYTPGCSCSYPICKKD) constitute a cross-link (cyclopeptide (Gly-Asp)). 3 disulfide bridges follow: Cys6–Cys20, Cys10–Cys22, and Cys15–Cys27.

This is a cyclic peptide. Post-translationally, contains 3 disulfide bonds.

In terms of biological role, probably participates in a plant defense mechanism (Potential). Binds to and induces leakage in phospholipd membranes, particularly ones containing 1-palmitoyl-2-oleophosphatidylethanolamine (POPE). The polypeptide is Cyclotide mela-5 (Melicytus latifolius (Norfolk Island mahoe)).